Reading from the N-terminus, the 324-residue chain is NADH-ubiquinone oxidoreductase chain 1 (324 aa).

8 helical membrane-spanning segments follow: residues 3–23 (FILS…SVAF), 77–97 (ISPI…PFFV), 104–124 (LGGL…MVAG), 150–170 (LALI…IYFF), 174–194 (IYMW…TISL), 226–246 (LIFM…CVIF), 250–270 (DVFN…FIWA), and 297–317 (YLLF…WIFF).

This sequence belongs to the complex I subunit 1 family.

The protein resides in the mitochondrion inner membrane. The enzyme catalyses a ubiquinone + NADH + 5 H(+)(in) = a ubiquinol + NAD(+) + 4 H(+)(out). Functionally, core subunit of the mitochondrial membrane respiratory chain NADH dehydrogenase (Complex I) that is believed to belong to the minimal assembly required for catalysis. Complex I functions in the transfer of electrons from NADH to the respiratory chain. The immediate electron acceptor for the enzyme is believed to be ubiquinone. The polypeptide is NADH-ubiquinone oxidoreductase chain 1 (mt:ND1) (Drosophila yakuba (Fruit fly)).